Here is a 279-residue protein sequence, read N- to C-terminus: Biotin synthase (279 aa).

Residues 2 to 232 (VRNSRLDICS…NVTIKIAAGR (231 aa)) form the Radical SAM core domain. The [4Fe-4S] cluster site is built by Cys20, Cys24, and Cys27. [2Fe-2S] cluster is bound by residues Cys96, Cys156, and Lys227.

This sequence belongs to the radical SAM superfamily. Biotin synthase family. As to quaternary structure, homodimer. [4Fe-4S] cluster is required as a cofactor. Requires [2Fe-2S] cluster as cofactor.

It carries out the reaction (4R,5S)-dethiobiotin + (sulfur carrier)-SH + 2 reduced [2Fe-2S]-[ferredoxin] + 2 S-adenosyl-L-methionine = (sulfur carrier)-H + biotin + 2 5'-deoxyadenosine + 2 L-methionine + 2 oxidized [2Fe-2S]-[ferredoxin]. It participates in cofactor biosynthesis; biotin biosynthesis; biotin from 7,8-diaminononanoate: step 2/2. In terms of biological role, catalyzes the conversion of dethiobiotin (DTB) to biotin by the insertion of a sulfur atom into dethiobiotin via a radical-based mechanism. The polypeptide is Biotin synthase (Thermotoga neapolitana (strain ATCC 49049 / DSM 4359 / NBRC 107923 / NS-E)).